The following is a 101-amino-acid chain: Small ribosomal subunit protein uS14 (101 aa).

Over residues 1–11 (MAKKSAIETNE) the composition is skewed to basic and acidic residues. A disordered region spans residues 1–24 (MAKKSAIETNERRRKLSQSKAAKR). Over residues 12–24 (RRRKLSQSKAAKR) the composition is skewed to basic residues.

It belongs to the universal ribosomal protein uS14 family. In terms of assembly, part of the 30S ribosomal subunit. Contacts proteins S3 and S10.

In terms of biological role, binds 16S rRNA, required for the assembly of 30S particles and may also be responsible for determining the conformation of the 16S rRNA at the A site. The protein is Small ribosomal subunit protein uS14 of Azorhizobium caulinodans (strain ATCC 43989 / DSM 5975 / JCM 20966 / LMG 6465 / NBRC 14845 / NCIMB 13405 / ORS 571).